The following is a 420-amino-acid chain: Tol-Pal system protein TolB (420 aa).

The signal sequence occupies residues 1-21 (MKLFVHLVLFISLFIPYFTKA).

The protein belongs to the TolB family. The Tol-Pal system is composed of five core proteins: the inner membrane proteins TolA, TolQ and TolR, the periplasmic protein TolB and the outer membrane protein Pal. They form a network linking the inner and outer membranes and the peptidoglycan layer.

The protein localises to the periplasm. Part of the Tol-Pal system, which plays a role in outer membrane invagination during cell division and is important for maintaining outer membrane integrity. The sequence is that of Tol-Pal system protein TolB from Wolbachia pipientis wMel.